Consider the following 334-residue polypeptide: Ketol-acid reductoisomerase (NADP(+)) (334 aa).

One can recognise a KARI N-terminal Rossmann domain in the interval 1 to 181 (MNIYYDKNAD…GGGRTGILET (181 aa)). Residues 24 to 27 (YGSQ), R47, S50, S52, and 82 to 85 (DEFQ) each bind NADP(+). Residue H107 is part of the active site. G133 serves as a coordination point for NADP(+). The region spanning 182 to 323 (SFKDETETDL…ESLRSMMPWI (142 aa)) is the KARI C-terminal knotted domain. 4 residues coordinate Mg(2+): D190, E194, E226, and E230. S251 contacts substrate.

This sequence belongs to the ketol-acid reductoisomerase family. Mg(2+) is required as a cofactor.

It carries out the reaction (2R)-2,3-dihydroxy-3-methylbutanoate + NADP(+) = (2S)-2-acetolactate + NADPH + H(+). The catalysed reaction is (2R,3R)-2,3-dihydroxy-3-methylpentanoate + NADP(+) = (S)-2-ethyl-2-hydroxy-3-oxobutanoate + NADPH + H(+). It participates in amino-acid biosynthesis; L-isoleucine biosynthesis; L-isoleucine from 2-oxobutanoate: step 2/4. It functions in the pathway amino-acid biosynthesis; L-valine biosynthesis; L-valine from pyruvate: step 2/4. In terms of biological role, involved in the biosynthesis of branched-chain amino acids (BCAA). Catalyzes an alkyl-migration followed by a ketol-acid reduction of (S)-2-acetolactate (S2AL) to yield (R)-2,3-dihydroxy-isovalerate. In the isomerase reaction, S2AL is rearranged via a Mg-dependent methyl migration to produce 3-hydroxy-3-methyl-2-ketobutyrate (HMKB). In the reductase reaction, this 2-ketoacid undergoes a metal-dependent reduction by NADPH to yield (R)-2,3-dihydroxy-isovalerate. The protein is Ketol-acid reductoisomerase (NADP(+)) of Vesicomyosocius okutanii subsp. Calyptogena okutanii (strain HA).